A 55-amino-acid polypeptide reads, in one-letter code: Conotoxin vc5b (55 aa).

The N-terminal stretch at 1-15 (VILLLLIASAPSVDA) is a signal peptide. The propeptide occupies 16–41 (QPKTKDDVPLAPLHDNAKSALQHLNQ). Gln53 is modified (glutamine amide).

Contains 2 disulfide bonds that can be either 'C1-C3, C2-C4' or 'C1-C4, C2-C3', since these disulfide connectivities have been observed for conotoxins with cysteine framework V (for examples, see AC P0DQQ7 and AC P81755). Expressed by the venom duct.

The protein resides in the secreted. The polypeptide is Conotoxin vc5b (Conus victoriae (Queen Victoria cone)).